Reading from the N-terminus, the 450-residue chain is Dol-P-Glc:Glc(2)Man(9)GlcNAc(2)-PP-Dol alpha-1,2-glucosyltransferase (450 aa).

The helical transmembrane segment at I12 to F32 threads the bilayer. N34 is a glycosylation site (N-linked (GlcNAc...) asparagine). The next 4 helical transmembrane spans lie at Y158 to I178, A190 to I210, L243 to I263, and I273 to P293. Residue N297 is glycosylated (N-linked (GlcNAc...) asparagine). The next 4 membrane-spanning stretches (helical) occupy residues I312–V332, L357–I377, F384–F404, and F429–I449.

This sequence belongs to the ALG10 glucosyltransferase family.

The protein localises to the endoplasmic reticulum membrane. The enzyme catalyses an alpha-D-Glc-(1-&gt;3)-alpha-D-Glc-(1-&gt;3)-alpha-D-Man-(1-&gt;2)-alpha-D-Man-(1-&gt;2)-alpha-D-Man-(1-&gt;3)-[alpha-D-Man-(1-&gt;2)-alpha-D-Man-(1-&gt;3)-[alpha-D-Man-(1-&gt;2)-alpha-D-Man-(1-&gt;6)]-alpha-D-Man-(1-&gt;6)]-beta-D-Man-(1-&gt;4)-beta-D-GlcNAc-(1-&gt;4)-alpha-D-GlcNAc-diphospho-di-trans,poly-cis-dolichol + a di-trans,poly-cis-dolichyl beta-D-glucosyl phosphate = a alpha-D-Glc-(1-&gt;2)-alpha-D-Glc-(1-&gt;3)-alpha-D-Glc-(1-&gt;3)-alpha-D-Man-(1-&gt;2)-alpha-D-Man-(1-&gt;2)-alpha-D-Man-(1-&gt;3)-[alpha-D-Man-(1-&gt;2)-alpha-D-Man-(1-&gt;3)-[alpha-D-Man-(1-&gt;2)-alpha-D-Man-(1-&gt;6)]-alpha-D-Man-(1-&gt;6)]-beta-D-Man-(1-&gt;4)-beta-D-GlcNAc-(1-&gt;4)-alpha-D-GlcNAc-diphospho-di-trans,poly-cis-dolichol + a di-trans,poly-cis-dolichyl phosphate + H(+). It functions in the pathway protein modification; protein glycosylation. In terms of biological role, dol-P-Glc:Glc(2)Man(9)GlcNAc(2)-PP-Dol alpha-1,2-glucosyltransferase that operates in the biosynthetic pathway of dolichol-linked oligosaccharides, the glycan precursors employed in protein asparagine (N)-glycosylation. The assembly of dolichol-linked oligosaccharides begins on the cytosolic side of the endoplasmic reticulum membrane and finishes in its lumen. The sequential addition of sugars to dolichol pyrophosphate produces dolichol-linked oligosaccharides containing fourteen sugars, including two GlcNAcs, nine mannoses and three glucoses. Once assembled, the oligosaccharide is transferred from the lipid to nascent proteins by oligosaccharyltransferases. In the lumen of the endoplasmic reticulum, adds the third and last glucose residue from dolichyl phosphate glucose (Dol-P-Glc) onto the lipid-linked oligosaccharide intermediate Glc(2)Man(9)GlcNAc(2)-PP-Dol to produce Glc(3)Man(9)GlcNAc(2)-PP-Dol. The protein is Dol-P-Glc:Glc(2)Man(9)GlcNAc(2)-PP-Dol alpha-1,2-glucosyltransferase (DIE2) of Candida albicans (strain SC5314 / ATCC MYA-2876) (Yeast).